We begin with the raw amino-acid sequence, 244 residues long: Acetylglutamate kinase (244 aa).

Substrate is bound by residues 40-41, Arg62, and Asn155; that span reads GG.

The protein belongs to the acetylglutamate kinase family. ArgB subfamily.

The protein resides in the cytoplasm. It carries out the reaction N-acetyl-L-glutamate + ATP = N-acetyl-L-glutamyl 5-phosphate + ADP. Its pathway is amino-acid biosynthesis; L-arginine biosynthesis; N(2)-acetyl-L-ornithine from L-glutamate: step 2/4. Functionally, catalyzes the ATP-dependent phosphorylation of N-acetyl-L-glutamate. This chain is Acetylglutamate kinase, found in Leuconostoc mesenteroides subsp. mesenteroides (strain ATCC 8293 / DSM 20343 / BCRC 11652 / CCM 1803 / JCM 6124 / NCDO 523 / NBRC 100496 / NCIMB 8023 / NCTC 12954 / NRRL B-1118 / 37Y).